The following is a 205-amino-acid chain: Holliday junction branch migration complex subunit RuvA (205 aa).

The tract at residues 1-64 (MIGKLKGVID…EDMIRLYGFA (64 aa)) is domain I. The domain II stretch occupies residues 65-143 (NQLEREWFRL…AFAGDASGTI (79 aa)). Positions 144–152 (GLKQELGAG) are flexible linker. Residues 153-205 (AAPAPVADAVSALSNLGYSRDQAANAVAAALKEAGENADSAKLIRLGLKELSR) are domain III.

The protein belongs to the RuvA family. Homotetramer. Forms an RuvA(8)-RuvB(12)-Holliday junction (HJ) complex. HJ DNA is sandwiched between 2 RuvA tetramers; dsDNA enters through RuvA and exits via RuvB. An RuvB hexamer assembles on each DNA strand where it exits the tetramer. Each RuvB hexamer is contacted by two RuvA subunits (via domain III) on 2 adjacent RuvB subunits; this complex drives branch migration. In the full resolvosome a probable DNA-RuvA(4)-RuvB(12)-RuvC(2) complex forms which resolves the HJ.

It is found in the cytoplasm. In terms of biological role, the RuvA-RuvB-RuvC complex processes Holliday junction (HJ) DNA during genetic recombination and DNA repair, while the RuvA-RuvB complex plays an important role in the rescue of blocked DNA replication forks via replication fork reversal (RFR). RuvA specifically binds to HJ cruciform DNA, conferring on it an open structure. The RuvB hexamer acts as an ATP-dependent pump, pulling dsDNA into and through the RuvAB complex. HJ branch migration allows RuvC to scan DNA until it finds its consensus sequence, where it cleaves and resolves the cruciform DNA. The protein is Holliday junction branch migration complex subunit RuvA of Brucella anthropi (strain ATCC 49188 / DSM 6882 / CCUG 24695 / JCM 21032 / LMG 3331 / NBRC 15819 / NCTC 12168 / Alc 37) (Ochrobactrum anthropi).